The sequence spans 463 residues: 23S rRNA (uracil(1939)-C(5))-methyltransferase RlmD (463 aa).

The TRAM domain occupies alanine 14 to glutamate 78. Residues cysteine 91, cysteine 97, cysteine 100, and cysteine 179 each coordinate [4Fe-4S] cluster. 6 residues coordinate S-adenosyl-L-methionine: glutamine 287, phenylalanine 316, asparagine 321, glutamate 337, asparagine 365, and aspartate 386. Cysteine 419 acts as the Nucleophile in catalysis.

This sequence belongs to the class I-like SAM-binding methyltransferase superfamily. RNA M5U methyltransferase family. RlmD subfamily.

It catalyses the reaction uridine(1939) in 23S rRNA + S-adenosyl-L-methionine = 5-methyluridine(1939) in 23S rRNA + S-adenosyl-L-homocysteine + H(+). Functionally, catalyzes the formation of 5-methyl-uridine at position 1939 (m5U1939) in 23S rRNA. This chain is 23S rRNA (uracil(1939)-C(5))-methyltransferase RlmD, found in Cupriavidus pinatubonensis (strain JMP 134 / LMG 1197) (Cupriavidus necator (strain JMP 134)).